Reading from the N-terminus, the 308-residue chain is Ribonuclease HIII (308 aa).

The RNase H type-2 domain occupies 88 to 304; the sequence is FHCIGSDEAG…RDKAIHLMNQ (217 aa). Positions 94, 95, and 199 each coordinate a divalent metal cation.

This sequence belongs to the RNase HII family. RnhC subfamily. It depends on Mn(2+) as a cofactor. Mg(2+) serves as cofactor.

The protein localises to the cytoplasm. It catalyses the reaction Endonucleolytic cleavage to 5'-phosphomonoester.. In terms of biological role, endonuclease that specifically degrades the RNA of RNA-DNA hybrids. This is Ribonuclease HIII from Staphylococcus epidermidis (strain ATCC 12228 / FDA PCI 1200).